An 869-amino-acid chain; its full sequence is Speckle targeted PIP5K1A-regulated poly(A) polymerase (869 aa).

The Matrin-type zinc-finger motif lies at 16–46 (FRCCLCDVTTANRPSLDAHLKGRKHRDLVQL). The RRM domain maps to 56 to 128 (RSVFVSGFPR…HGLRVRPREQ (73 aa)). Residues 114-144 (HSLGGHGLRVRPREQKEFQSPASKSPKGVDS) are disordered. Residue Ser205 participates in ATP binding. Mg(2+) is bound by residues Asp216 and Asp218. The UTP site is built by Asp216 and Asp218. 2 disordered regions span residues 226–247 (MEET…LDSA) and 259–335 (CTPA…ASKD). 2 stretches are compositionally biased toward polar residues: residues 266–276 (DSLSPTSVQES) and 283–299 (TPSS…LGSD). Over residues 314–335 (QEDRKEGKQGKELELAEEASKD) the composition is skewed to basic and acidic residues. Asn395 contributes to the ATP binding site. Residues Asn395, Arg417, Tyr435, and His552 each coordinate UTP. A PAP-associated domain is found at 494 to 552 (LSSLLAQFFSCVSCLDLSGSLLSLREGRPLMVAEGLPSDLWEGLRLGPMNLQDPFDLSH). The tract at residues 601 to 869 (SSPSSLLSAK…IPQALKNLLK (269 aa)) is KA1; binds the bulging loops of U6 snRNA but is dispensable for terminal uridylyltransferase activity. 4 disordered regions span residues 640–689 (QGTK…DHSE), 735–757 (MKPE…HPSS), 775–796 (ARRR…TGAE), and 803–822 (RVTQ…PGEP). Over residues 671–689 (KSFEEGKEEPQGCAGDHSE) the composition is skewed to basic and acidic residues. Residues Ser688 and Ser744 each carry the phosphoserine modification.

Belongs to the DNA polymerase type-B-like family. Associates with the cleavage and polyadenylation specificity factor (CPSF) complex. Interacts with CPSF1 and CPSF3; the interaction is direct. Interacts with PIP5K1A. Mg(2+) serves as cofactor. It depends on Mn(2+) as a cofactor. Post-translationally, phosphorylated by CK1 in the proline-rich (Pro-rich) region.

Its subcellular location is the nucleus. It is found in the nucleolus. The protein resides in the nucleus speckle. The catalysed reaction is RNA(n) + UTP = RNA(n)-3'-uridine ribonucleotide + diphosphate. It carries out the reaction RNA(n) + ATP = RNA(n)-3'-adenine ribonucleotide + diphosphate. Adenylyltransferase activity is specifically phosphatidylinositol 4,5-bisphosphate (PtdIns(4,5)P2). Functionally, poly(A) polymerase that creates the 3'-poly(A) tail of specific pre-mRNAs. Localizes to nuclear speckles together with PIP5K1A and mediates polyadenylation of a select set of mRNAs, such as HMOX1. In addition to polyadenylation, it is also required for the 3'-end cleavage of pre-mRNAs: binds to the 3'UTR of targeted pre-mRNAs and promotes the recruitment and assembly of the CPSF complex on the 3'UTR of pre-mRNAs. In addition to adenylyltransferase activity, also has uridylyltransferase activity. However, the ATP ratio is higher than UTP in cells, suggesting that it functions primarily as a poly(A) polymerase. Acts as a specific terminal uridylyltransferase for U6 snRNA in vitro: responsible for a controlled elongation reaction that results in the restoration of the four 3'-terminal UMP-residues found in newly transcribed U6 snRNA. Not involved in replication-dependent histone mRNA degradation. This Mus musculus (Mouse) protein is Speckle targeted PIP5K1A-regulated poly(A) polymerase (Tut1).